We begin with the raw amino-acid sequence, 231 residues long: Uracil-DNA glycosylase (231 aa).

Catalysis depends on Asp-74, which acts as the Proton acceptor.

The protein belongs to the uracil-DNA glycosylase (UDG) superfamily. UNG family.

The protein localises to the cytoplasm. The catalysed reaction is Hydrolyzes single-stranded DNA or mismatched double-stranded DNA and polynucleotides, releasing free uracil.. Excises uracil residues from the DNA which can arise as a result of misincorporation of dUMP residues by DNA polymerase or due to deamination of cytosine. This Campylobacter jejuni subsp. jejuni serotype O:2 (strain ATCC 700819 / NCTC 11168) protein is Uracil-DNA glycosylase.